We begin with the raw amino-acid sequence, 85 residues long: Large ribosomal subunit protein bL27 (85 aa).

The segment covering 1-13 (MAKTKSGGSTSNG) has biased composition (polar residues). Residues 1–26 (MAKTKSGGSTSNGRDSKGRRLGQKLG) are disordered.

Belongs to the bacterial ribosomal protein bL27 family.

This Mycoplasma mobile (strain ATCC 43663 / 163K / NCTC 11711) (Mesomycoplasma mobile) protein is Large ribosomal subunit protein bL27.